The following is a 46-amino-acid chain: Photosystem II reaction center protein K (46 aa).

The propeptide occupies Met-1–Ala-9. Over Lys-10 to Asp-19 the chain is Lumenal. The helical transmembrane segment at Pro-20–Trp-39 threads the bilayer. Residues Gln-40–Arg-46 lie on the Cytoplasmic side of the membrane.

Belongs to the PsbK family. As to quaternary structure, PSII is composed of 1 copy each of membrane proteins PsbA, PsbB, PsbC, PsbD, PsbE, PsbF, PsbH, PsbI, PsbJ, PsbK, PsbL, PsbM, PsbT, PsbX, PsbY, PsbZ, Psb30/Ycf12, peripheral proteins PsbO, CyanoQ(PsbQ), PsbU, PsbV and a large number of cofactors. It forms dimeric complexes. Part of a photosystem II (PSII) assembly intermediate complex PSII-I; crystallized from a strain deleted of psbJ, it forms monomeric PSII before addition of the oxygen evolving complex. PSII-I includes 3 assembly factors not found in mature PSII (Psb27, Psb28 and Psb34). Requires PSII binds multiple chlorophylls, carotenoids and specific lipids. as cofactor.

The protein localises to the cellular thylakoid membrane. Its function is as follows. One of the components of the core complex of photosystem II (PSII). PSII is a light-driven water:plastoquinone oxidoreductase that uses light energy to abstract electrons from H(2)O, generating O(2) and a proton gradient subsequently used for ATP formation. It consists of a core antenna complex that captures photons, and an electron transfer chain that converts photonic excitation into a charge separation. Required for association of PsbZ and Psb30/Ycf12 with PSII. In Thermosynechococcus vestitus (strain NIES-2133 / IAM M-273 / BP-1), this protein is Photosystem II reaction center protein K.